The primary structure comprises 496 residues: Glycogen synthase (496 aa).

An ADP-alpha-D-glucose-binding site is contributed by Lys-24.

The protein belongs to the glycosyltransferase 1 family. Bacterial/plant glycogen synthase subfamily.

It catalyses the reaction [(1-&gt;4)-alpha-D-glucosyl](n) + ADP-alpha-D-glucose = [(1-&gt;4)-alpha-D-glucosyl](n+1) + ADP + H(+). Its pathway is glycan biosynthesis; glycogen biosynthesis. In terms of biological role, synthesizes alpha-1,4-glucan chains using ADP-glucose. The chain is Glycogen synthase from Nitrosospira multiformis (strain ATCC 25196 / NCIMB 11849 / C 71).